We begin with the raw amino-acid sequence, 96 residues long: Putative pterin-4-alpha-carbinolamine dehydratase (96 aa).

Belongs to the pterin-4-alpha-carbinolamine dehydratase family.

It catalyses the reaction (4aS,6R)-4a-hydroxy-L-erythro-5,6,7,8-tetrahydrobiopterin = (6R)-L-erythro-6,7-dihydrobiopterin + H2O. In Brucella anthropi (strain ATCC 49188 / DSM 6882 / CCUG 24695 / JCM 21032 / LMG 3331 / NBRC 15819 / NCTC 12168 / Alc 37) (Ochrobactrum anthropi), this protein is Putative pterin-4-alpha-carbinolamine dehydratase.